The following is a 640-amino-acid chain: Chaperone protein HtpG (640 aa).

The interval 1–343 (MQTAENIEHL…SSDLPLNVSR (343 aa)) is a; substrate-binding. The segment at 344–564 (EILQESKDID…THDVSGNLGR (221 aa)) is b. The tract at residues 565–640 (LLKSAGQKVP…LLLQNILSGK (76 aa)) is c.

It belongs to the heat shock protein 90 family. In terms of assembly, homodimer.

The protein resides in the cytoplasm. Functionally, molecular chaperone. Has ATPase activity. The polypeptide is Chaperone protein HtpG (Nitrosomonas europaea (strain ATCC 19718 / CIP 103999 / KCTC 2705 / NBRC 14298)).